Reading from the N-terminus, the 735-residue chain is Muskelin (735 aa).

At Ala2 the chain carries N-acetylalanine. The LisH domain occupies 172-204 (REQEAIRLCLKHFRQHNYTEAFESLQKKTKIAL). The region spanning 206-258 (HPMLTDIHDKLVLKGDFDACEELIEKAVNDGLFNQYISQQEYKPRWSQIIPKS) is the CTLH domain. Kelch repeat units lie at residues 284–330 (TVYL…SCHK), 339–391 (QIYT…FDHQ), 408–458 (ILTC…SRIG), 469–515 (CLYV…TGFT), 526–578 (EIHV…SLQE), and 597–651 (VHYL…AQMD).

Homodimer; may form higher oligomers. Identified in the CTLH complex that contains GID4, RANBP9 and/or RANBP10, MKLN1, MAEA, RMND5A (or alternatively its paralog RMND5B), GID8, ARMC8, WDR26 and YPEL5. Within this complex, MAEA, RMND5A (or alternatively its paralog RMND5B), GID8, WDR26, and RANBP9 and/or RANBP10 form the catalytic core, while GID4, MKLN1, ARMC8 and YPEL5 have ancillary roles. Interacts with RANBP9. Part of a complex consisting of RANBP9, MKLN1 and GID8. Interacts with GABRA1. Interacts with the C-terminal tail of PTGER3.

It localises to the cytoplasm. It is found in the cytosol. Its subcellular location is the nucleus. The protein resides in the nucleoplasm. The protein localises to the cell projection. It localises to the ruffle. It is found in the cell cortex. Its subcellular location is the synapse. The protein resides in the postsynapse. Its function is as follows. Component of the CTLH E3 ubiquitin-protein ligase complex that selectively accepts ubiquitin from UBE2H and mediates ubiquitination and subsequent proteasomal degradation of the transcription factor HBP1. Required for internalization of the GABA receptor GABRA1 from the cell membrane via endosomes and subsequent GABRA1 degradation. Acts as a mediator of cell spreading and cytoskeletal responses to the extracellular matrix component THBS1. This chain is Muskelin (MKLN1), found in Pongo abelii (Sumatran orangutan).